The chain runs to 431 residues: Enolase (431 aa).

Gln164 is a (2R)-2-phosphoglycerate binding site. Residue Glu206 is the Proton donor of the active site. Mg(2+) contacts are provided by Asp243, Glu286, and Asp313. Residues Lys338, Arg367, Ser368, and Lys389 each coordinate (2R)-2-phosphoglycerate. The Proton acceptor role is filled by Lys338.

The protein belongs to the enolase family. Mg(2+) is required as a cofactor.

The protein localises to the cytoplasm. Its subcellular location is the secreted. The protein resides in the cell surface. It carries out the reaction (2R)-2-phosphoglycerate = phosphoenolpyruvate + H2O. It functions in the pathway carbohydrate degradation; glycolysis; pyruvate from D-glyceraldehyde 3-phosphate: step 4/5. Its function is as follows. Catalyzes the reversible conversion of 2-phosphoglycerate (2-PG) into phosphoenolpyruvate (PEP). It is essential for the degradation of carbohydrates via glycolysis. The chain is Enolase from Chloroflexus aggregans (strain MD-66 / DSM 9485).